A 107-amino-acid polypeptide reads, in one-letter code: Prepilin peptidase-dependent protein C (107 aa).

Residues Met1 to Gly10 constitute a propeptide that is removed on maturation. N-methylphenylalanine is present on Phe11. A helical membrane pass occupies residues Phe11–Leu30.

The protein localises to the membrane. Its function is as follows. Not yet known. In Escherichia coli (strain K12), this protein is Prepilin peptidase-dependent protein C (ppdC).